Reading from the N-terminus, the 86-residue chain is Short neurotoxin homolog NTL1 (86 aa).

Positions 1–21 (MKTLLLSLVVLTIACLDLGYT) are cleaved as a signal peptide. Disulfide bonds link Cys24/Cys45, Cys38/Cys62, Cys66/Cys78, and Cys79/Cys84.

As to expression, expressed by the venom gland.

The protein localises to the secreted. The sequence is that of Short neurotoxin homolog NTL1 from Bungarus multicinctus (Many-banded krait).